Consider the following 55-residue polypeptide: Large ribosomal subunit protein bL33 (55 aa).

This sequence belongs to the bacterial ribosomal protein bL33 family.

This Phenylobacterium zucineum (strain HLK1) protein is Large ribosomal subunit protein bL33.